The following is a 480-amino-acid chain: Argininosuccinate lyase (480 aa).

Residues 1 to 17 (MTDTTPSADLGASSQQP) are compositionally biased toward polar residues. The disordered stretch occupies residues 1–24 (MTDTTPSADLGASSQQPAKAWSGR).

Belongs to the lyase 1 family. Argininosuccinate lyase subfamily.

The protein localises to the cytoplasm. It catalyses the reaction 2-(N(omega)-L-arginino)succinate = fumarate + L-arginine. Its pathway is amino-acid biosynthesis; L-arginine biosynthesis; L-arginine from L-ornithine and carbamoyl phosphate: step 3/3. This chain is Argininosuccinate lyase, found in Azoarcus sp. (strain BH72).